The chain runs to 576 residues: Proline--tRNA ligase (576 aa).

It belongs to the class-II aminoacyl-tRNA synthetase family. ProS type 1 subfamily. As to quaternary structure, homodimer.

The protein localises to the cytoplasm. It carries out the reaction tRNA(Pro) + L-proline + ATP = L-prolyl-tRNA(Pro) + AMP + diphosphate. Functionally, catalyzes the attachment of proline to tRNA(Pro) in a two-step reaction: proline is first activated by ATP to form Pro-AMP and then transferred to the acceptor end of tRNA(Pro). As ProRS can inadvertently accommodate and process non-cognate amino acids such as alanine and cysteine, to avoid such errors it has two additional distinct editing activities against alanine. One activity is designated as 'pretransfer' editing and involves the tRNA(Pro)-independent hydrolysis of activated Ala-AMP. The other activity is designated 'posttransfer' editing and involves deacylation of mischarged Ala-tRNA(Pro). The misacylated Cys-tRNA(Pro) is not edited by ProRS. This Bordetella bronchiseptica (strain ATCC BAA-588 / NCTC 13252 / RB50) (Alcaligenes bronchisepticus) protein is Proline--tRNA ligase.